The sequence spans 759 residues: uncharacterized protein (759 aa).

This is an uncharacterized protein from Escherichia coli (strain K12).